Consider the following 469-residue polypeptide: MSAPRTLYDKIWDDHVVDQQEDGTCLLYIDRHLVHEVTSPQAFEGLRMAGRPVRHPEKTLAVVDHNVPTSPDRINGIQNEESRIQVEALARNAADFGVEYYSERDKRQGIVHIVGPEQGFTLPGMTIVCGDSHTSTHGAFGALAHGIGTSEVEHVLATQTLIQKKAKNMLVRVDGKLPAGVTAKDIVLAIIGEIGTAGGTGYVIEYAGEAIRSLSMEGRMTICNMSIEGGARAGLIAPDETTFEYIKGRPRAPQGETLEQAINYWKTLHSDEGAHFDKIVTLDAGSLPPIVSWGSSPEDVVSVTGVVPNPDDIADETKRASKWRALDYMGLKPGTKITDIAVDRVFIGSCTNGRIEDLRAAAKVVEGKKVAPTVNAMIVPGSGLVKEQAEAEGLHKIFIEAGFDWREPGCSMCLAMNDDRLKPGERCASTSNRNFEGRQGFKGRTHLVSPAMAAAAAIAGHFVDIRAWK.

The [4Fe-4S] cluster site is built by Cys-350, Cys-410, and Cys-413.

It belongs to the aconitase/IPM isomerase family. LeuC type 1 subfamily. Heterodimer of LeuC and LeuD. The cofactor is [4Fe-4S] cluster.

It catalyses the reaction (2R,3S)-3-isopropylmalate = (2S)-2-isopropylmalate. The protein operates within amino-acid biosynthesis; L-leucine biosynthesis; L-leucine from 3-methyl-2-oxobutanoate: step 2/4. Catalyzes the isomerization between 2-isopropylmalate and 3-isopropylmalate, via the formation of 2-isopropylmaleate. In Brucella abortus (strain S19), this protein is 3-isopropylmalate dehydratase large subunit.